A 263-amino-acid chain; its full sequence is Small ribosomal subunit protein bS1c (263 aa).

S1 motif domains are found at residues Gly27–Arg96, Asp114–Arg178, and Gly192–Lys260.

This sequence belongs to the bacterial ribosomal protein bS1 family.

Its subcellular location is the plastid. It localises to the chloroplast. The protein is Small ribosomal subunit protein bS1c (rps1) of Porphyra purpurea (Red seaweed).